Reading from the N-terminus, the 799-residue chain is Elongation factor G, mitochondrial (799 aa).

The N-terminal 24 residues, 1–24 (MRCPSLARLPHRAVSGLTRTPVRF), are a transit peptide targeting the mitochondrion. One can recognise a tr-type G domain in the interval 97–384 (SRVRNIGIAA…GVIDYLPNPS (288 aa)). GTP is bound by residues 106 to 113 (AHIDSGKT), 182 to 186 (DTPGH), and 236 to 239 (NKMD).

The protein belongs to the TRAFAC class translation factor GTPase superfamily. Classic translation factor GTPase family. EF-G/EF-2 subfamily.

It localises to the mitochondrion. Its pathway is protein biosynthesis; polypeptide chain elongation. Its function is as follows. Mitochondrial GTPase that catalyzes the GTP-dependent ribosomal translocation step during translation elongation. During this step, the ribosome changes from the pre-translocational (PRE) to the post-translocational (POST) state as the newly formed A-site-bound peptidyl-tRNA and P-site-bound deacylated tRNA move to the P and E sites, respectively. Catalyzes the coordinated movement of the two tRNA molecules, the mRNA and conformational changes in the ribosome. The chain is Elongation factor G, mitochondrial (mef1) from Emericella nidulans (strain FGSC A4 / ATCC 38163 / CBS 112.46 / NRRL 194 / M139) (Aspergillus nidulans).